Here is a 490-residue protein sequence, read N- to C-terminus: Probable G-protein coupled receptor npr-8 (490 aa).

Residues 1–55 (MEVKDIDNYCDRGISPNASNYLTYPFDGLCLQKFFYQLQTSLRRFTPYEEIIYTT) lie on the Extracellular side of the membrane. N17 carries an N-linked (GlcNAc...) asparagine glycan. Residues 56 to 76 (VYIIISVAAVIGNGLVIMAVV) traverse the membrane as a helical segment. At 77-86 (RKKTMRTNRN) the chain is on the cytoplasmic side. Residues 87–107 (VLILNLALSNLILAITNIPFL) form a helical membrane-spanning segment. Over 108–125 (WLPSIDFEFPYSRFFCKF) the chain is Extracellular. Residues 126–146 (ANVLPGSNIYCSTLTISVMAI) traverse the membrane as a helical segment. Over 147–166 (DRYYSVKKLKIASNRKQCFH) the chain is Cytoplasmic. Residues 167–187 (AVLVSLAIWIVSFILSLPLLL) traverse the membrane as a helical segment. The Extracellular portion of the chain corresponds to 188 to 236 (YYETSMLYVMREIRVVDQSGQEVIRSYGWRQCRLVSAGRLPDITQSIQL). A helical membrane pass occupies residues 237–257 (LMSILQVAFLYIVPLFVLSIF). Over 258–331 (NVKLTRFLKT…QRTNRTTSLL (74 aa)) the chain is Cytoplasmic. A disordered region spans residues 272 to 322 (MSKTRAPPKRFDRSDSHHNSLKNNNNHTSSLRSPSMPSIRSSITERNKTNQ). Residues 280-289 (KRFDRSDSHH) show a composition bias toward basic and acidic residues. A compositionally biased stretch (low complexity) spans 292-313 (LKNNNNHTSSLRSPSMPSIRSS). A helical membrane pass occupies residues 332 to 352 (IAMAGSYAALWFPFTLITFLI). The Extracellular segment spans residues 353–374 (DFELIINQDYVNLVERIDQTCK). The chain crosses the membrane as a helical span at residues 375 to 395 (MVSMLSICVNPFLYGFLNTNF). Over 396 to 490 (RHEFSDIYYR…DDDIEKDSFV (95 aa)) the chain is Cytoplasmic.

This sequence belongs to the G-protein coupled receptor 1 family.

Its subcellular location is the cell membrane. Not known. Putative receptor. This is Probable G-protein coupled receptor npr-8 from Caenorhabditis elegans.